We begin with the raw amino-acid sequence, 399 residues long: Brefeldin A resistance protein (399 aa).

3 stretches are compositionally biased toward basic and acidic residues: residues 1 to 31 (MTSK…DETS), 49 to 69 (SKSE…KETT), and 101 to 130 (KVEE…KESA). Disordered regions lie at residues 1 to 173 (MTSK…FGAF) and 191 to 269 (KKFA…SEII). Positions 138-157 (SPFSQFASFSNASSPFSNVS) are enriched in low complexity. 2 stretches are compositionally biased toward basic and acidic residues: residues 205–217 (SGKE…KSSE) and 241–252 (TKSEPKEADKGS). Positions 253-263 (GDSTKSTMHQL) are enriched in polar residues. In terms of domain architecture, RanBD1 spans 256–396 (TKSTMHQLSD…VLEAIPKGGR (141 aa)).

In terms of processing, phosphorylated.

It localises to the nucleus. The sequence is that of Brefeldin A resistance protein (hba1) from Schizosaccharomyces pombe (strain 972 / ATCC 24843) (Fission yeast).